The primary structure comprises 255 residues: Acetyl-coenzyme A carboxylase carboxyl transferase subunit alpha (255 aa).

Positions methionine 1–arginine 235 constitute a CoA carboxyltransferase C-terminal domain.

The protein belongs to the AccA family. Acetyl-CoA carboxylase is a heterohexamer composed of biotin carboxyl carrier protein (AccB), biotin carboxylase (AccC) and two subunits each of ACCase subunit alpha (AccA) and ACCase subunit beta (AccD).

It localises to the cytoplasm. It catalyses the reaction N(6)-carboxybiotinyl-L-lysyl-[protein] + acetyl-CoA = N(6)-biotinyl-L-lysyl-[protein] + malonyl-CoA. Its pathway is lipid metabolism; malonyl-CoA biosynthesis; malonyl-CoA from acetyl-CoA: step 1/1. Its function is as follows. Component of the acetyl coenzyme A carboxylase (ACC) complex. First, biotin carboxylase catalyzes the carboxylation of biotin on its carrier protein (BCCP) and then the CO(2) group is transferred by the carboxyltransferase to acetyl-CoA to form malonyl-CoA. This chain is Acetyl-coenzyme A carboxylase carboxyl transferase subunit alpha, found in Streptococcus pneumoniae serotype 19F (strain G54).